We begin with the raw amino-acid sequence, 128 residues long: Transcription antitermination protein NusB (128 aa).

Belongs to the NusB family.

Its function is as follows. Involved in transcription antitermination. Required for transcription of ribosomal RNA (rRNA) genes. Binds specifically to the boxA antiterminator sequence of the ribosomal RNA (rrn) operons. The protein is Transcription antitermination protein NusB of Listeria welshimeri serovar 6b (strain ATCC 35897 / DSM 20650 / CCUG 15529 / CIP 8149 / NCTC 11857 / SLCC 5334 / V8).